Reading from the N-terminus, the 569-residue chain is Protein ste7 (569 aa).

2 disordered regions span residues 195 to 219 (APIT…VNSV) and 255 to 274 (FSVS…SPPI). Positions 198 to 219 (TTSSATHTSQFSTSSSSSVNSV) are enriched in low complexity. Positions 264–274 (PQTPISMSPPI) are enriched in pro residues.

The protein belongs to the arrestin family.

Functionally, has a role in promoting meiosis whereby it is involved in establishing the mating pheromone signaling pathway. It also has a role in suppressing meiosis until the conjugation process is complete. The polypeptide is Protein ste7 (ste7) (Schizosaccharomyces pombe (strain 972 / ATCC 24843) (Fission yeast)).